The sequence spans 710 residues: Lactotransferrin (710 aa).

An N-terminal signal peptide occupies residues Met-1–Ala-19. Phe-10 is modified (phosphoserine; alternate). Residue Phe-10 is glycosylated (O-linked (GlcNAc) serine; alternate). The segment at Gly-20–Ser-24 is critical for glycosaminoglycan, lipid A, lysozyme and DNA binding. 2 bactericidal and antifungal activity regions span residues Gly-20–Ala-29 and Phe-39–Arg-49. Positions Arg-21–Arg-22 are important for full bactericidal and antifungal activities. Transferrin-like domains lie at Val-25–Lys-352 and Val-364–Lys-695. 2 cysteine pairs are disulfide-bonded: Cys-28–Cys-64 and Cys-38–Cys-55. 2 interaction with PspA regions span residues Phe-39–Arg-46 and Lys-57–Arg-58. The tract at residues Phe-39–Arg-49 is interaction with lipopolysaccharide. The tract at residues Arg-46–Pro-51 is involved in glycosaminoglycan binding. Asp-79 is a binding site for Fe(3+). Lys-92 is a catalytic residue. Tyr-111 serves as a coordination point for Fe(3+). Disulfide bonds link Cys-134-Cys-217, Cys-176-Cys-192, Cys-189-Cys-200, and Cys-250-Cys-264. Residues Thr-136, Arg-140, Ala-142, and Gly-143 each coordinate hydrogencarbonate. Asn-156 carries N-linked (GlcNAc...) asparagine glycosylation. Tyr-211 contacts Fe(3+). Fe(3+) is bound at residue His-272. Ser-278 functions as the Nucleophile in the catalytic mechanism. 2 cysteine pairs are disulfide-bonded: Cys-367–Cys-399 and Cys-377–Cys-390. Glycyl lysine isopeptide (Lys-Gly) (interchain with G-Cter in ubiquitin) cross-links involve residues Gln-379 and Ser-391. Positions 414 and 454 each coordinate Fe(3+). 8 disulfides stabilise this stretch: Cys-424-Cys-705, Cys-446-Cys-668, Cys-478-Cys-553, Cys-502-Cys-696, Cys-512-Cys-526, Cys-523-Cys-536, Cys-594-Cys-608, and Cys-646-Cys-651. Positions 480, 484, 486, and 487 each coordinate hydrogencarbonate. Asn-497 carries N-linked (GlcNAc...) asparagine glycosylation. Fe(3+) is bound at residue Tyr-547. Position 616 (His-616) interacts with Fe(3+). N-linked (GlcNAc...) asparagine glycosylation occurs at Asn-642.

The protein belongs to the transferrin family. As to quaternary structure, monomer. Found in a complex with LTF, CLU, EPPIN and SEMG1. Found in a complex with MPO and LTF; interacts directly with CP, allows Fe(3+) incorporation into LTF and activation of CP ferroxidase activity. Phosphorylation at Ser-10 activates the transcriptional activity. Phosphorylation at Ser-10 also promotes proteasomal degradation. Alternatively can undergo O-GlcNAcylation at Ser-10. Post-translationally, O-GlcNAcylation at Ser-10 inhibits DNA binding and negatively regulates the transcriptional activity. Alternatively can undergo phosphorylation at Ser-10. In terms of processing, poly-N-acetyllactosaminic carbohydrate moiety seems to be needed for TLR4 activation. High levels are found in saliva and tears, intermediate levels in serum and plasma, and low levels in urine. In kidney, detected in the distal collecting tubules in the medulla but not in the cortical region or in blood vessels. Detected in peripheral blood neutrophils (at protein level). Isoform 1 and isoform DeltaLf are expressed in breast, prostate, spleen, pancreas, kidney, small intestine, lung, skeletal muscle, uterus, thymus and fetal liver. Isoform 1 is expressed in brain, testis and peripheral blood leukocytes; isoform DeltaLf is barely detectable in these tissues. Isoform DeltaLf is expressed in placenta, liver and ovary; isoform 1 is barely detectable in these tissues. In kidney, isoform 1 is expressed at high levels in the collecting tubules of the medulla but at very low levels in the cortex.

The protein resides in the secreted. The protein localises to the cytoplasmic granule. It is found in the cytoplasm. Its subcellular location is the nucleus. In terms of biological role, transferrins are iron binding transport proteins which can bind two Fe(3+) ions in association with the binding of an anion, usually bicarbonate. Its function is as follows. Major iron-binding and multifunctional protein found in exocrine fluids such as breast milk and mucosal secretions. Has antimicrobial activity, which depends on the extracellular cation concentration. Antimicrobial properties include bacteriostasis, which is related to its ability to sequester free iron and thus inhibit microbial growth, as well as direct bactericidal properties leading to the release of lipopolysaccharides from the bacterial outer membrane. Can also prevent bacterial biofilm development in P.aeruginosa infection. Has weak antifungal activity against C.albicans. Has anabolic, differentiating and anti-apoptotic effects on osteoblasts and can also inhibit osteoclastogenesis, possibly playing a role in the regulation of bone growth. Promotes binding of species C adenoviruses to epithelial cells, promoting adenovirus infection. Can inhibit papillomavirus infections. Stimulates the TLR4 signaling pathway leading to NF-kappa-B activation and subsequent pro-inflammatory cytokine production while also interfering with the lipopolysaccharide (LPS)-stimulated TLR4 signaling. Inhibits neutrophil granulocyte migration to sites of apoptosis, when secreted by apoptotic cells. Stimulates VEGFA-mediated endothelial cell migration and proliferation. Binds heparin, chondroitin sulfate and possibly other glycosaminoglycans (GAGs). Also binds specifically to pneumococcal surface protein A (PspA), the lipid A portion of bacterial lipopolysaccharide (LPS), lysozyme and DNA. Lactoferricin binds to the bacterial surface and is crucial for the bactericidal functions. Has some antiviral activity against papillomavirus infection. N-terminal region shows strong antifungal activity against C.albicans. Contains two BBXB heparin-binding consensus sequences that appear to form the predominate functional GAG-binding site. Functionally, has antimicrobial activity and is able to permeabilize different ions through liposomal membranes. In terms of biological role, has opioid antagonist activity. Shows preference for mu-receptor. Its function is as follows. Has opioid antagonist activity. Shows higher degrees of preference for kappa-receptors than for mu-receptors. The lactotransferrin transferrin-like domain 1 functions as a serine protease of the peptidase S60 family that cuts arginine rich regions. This function contributes to the antimicrobial activity. Shows a preferential cleavage at -Arg-Ser-Arg-Arg-|- and -Arg-Arg-Ser-Arg-|-, and of Z-Phe-Arg-|-aminomethylcoumarin sites. Functionally, transcription factor with antiproliferative properties and ability to induce cell cycle arrest. Binds to the DeltaLf response element found in the SKP1, BAX, DCPS, and SELENOH promoters. The protein is Lactotransferrin of Homo sapiens (Human).